Reading from the N-terminus, the 386-residue chain is Succinate--CoA ligase [ADP-forming] subunit beta (386 aa).

The ATP-grasp domain occupies 9-244; that stretch reads KEILRKYGVP…HDEEDPLETR (236 aa). ATP is bound by residues K46, 53-55, E99, C102, and E107; that span reads GRG. N199 and D213 together coordinate Mg(2+). Substrate-binding positions include N264 and 321 to 323; that span reads GIM.

The protein belongs to the succinate/malate CoA ligase beta subunit family. Heterotetramer of two alpha and two beta subunits. Mg(2+) is required as a cofactor.

The enzyme catalyses succinate + ATP + CoA = succinyl-CoA + ADP + phosphate. It carries out the reaction GTP + succinate + CoA = succinyl-CoA + GDP + phosphate. It functions in the pathway carbohydrate metabolism; tricarboxylic acid cycle; succinate from succinyl-CoA (ligase route): step 1/1. Functionally, succinyl-CoA synthetase functions in the citric acid cycle (TCA), coupling the hydrolysis of succinyl-CoA to the synthesis of either ATP or GTP and thus represents the only step of substrate-level phosphorylation in the TCA. The beta subunit provides nucleotide specificity of the enzyme and binds the substrate succinate, while the binding sites for coenzyme A and phosphate are found in the alpha subunit. The protein is Succinate--CoA ligase [ADP-forming] subunit beta of Rickettsia peacockii (strain Rustic).